The following is a 435-amino-acid chain: 3-phosphoshikimate 1-carboxyvinyltransferase (435 aa).

3-phosphoshikimate-binding residues include Lys-22, Ser-23, and Arg-27. Lys-22 is a binding site for phosphoenolpyruvate. Positions 94 and 122 each coordinate phosphoenolpyruvate. Ser-166, Gln-168, Asp-314, and Lys-341 together coordinate 3-phosphoshikimate. Gln-168 is a binding site for phosphoenolpyruvate. Catalysis depends on Asp-314, which acts as the Proton acceptor. Residues Arg-345 and Arg-388 each contribute to the phosphoenolpyruvate site.

Belongs to the EPSP synthase family. In terms of assembly, monomer.

Its subcellular location is the cytoplasm. The enzyme catalyses 3-phosphoshikimate + phosphoenolpyruvate = 5-O-(1-carboxyvinyl)-3-phosphoshikimate + phosphate. Its pathway is metabolic intermediate biosynthesis; chorismate biosynthesis; chorismate from D-erythrose 4-phosphate and phosphoenolpyruvate: step 6/7. Catalyzes the transfer of the enolpyruvyl moiety of phosphoenolpyruvate (PEP) to the 5-hydroxyl of shikimate-3-phosphate (S3P) to produce enolpyruvyl shikimate-3-phosphate and inorganic phosphate. The sequence is that of 3-phosphoshikimate 1-carboxyvinyltransferase from Vesicomyosocius okutanii subsp. Calyptogena okutanii (strain HA).